A 349-amino-acid polypeptide reads, in one-letter code: Macrophage-capping protein (349 aa).

Methionine 1 bears the N-acetylmethionine mark. Gelsolin-like repeat units lie at residues 28-107 (KLKP…DLFM), 147-222 (KNIR…AEMI), and 264-342 (LTKV…PIFK). The Nuclear localization signal motif lies at 138–147 (RKLYQVKGKK). Serine 338 carries the post-translational modification Phosphoserine.

Belongs to the villin/gelsolin family. As to quaternary structure, interacts with NUP62. Interacts with NUTF2 and RAN; involved in CAPG nuclear import. Phosphorylated.

It is found in the nucleus. It localises to the cytoplasm. The protein localises to the melanosome. Its subcellular location is the cell projection. The protein resides in the lamellipodium. It is found in the ruffle. Functionally, calcium-sensitive protein which reversibly blocks the barbed ends of actin filaments but does not sever preformed actin filaments. May play an important role in macrophage function. May play a role in regulating cytoplasmic and/or nuclear structures through potential interactions with actin. May bind DNA. Uncapping occurs either when Ca(2+) falls or when the concentration of polyphosphoinositide rises, both at low and high Ca(2+). In Rattus norvegicus (Rat), this protein is Macrophage-capping protein (Capg).